We begin with the raw amino-acid sequence, 147 residues long: Hemoglobin subunit gamma (147 aa).

The 145-residue stretch at 3-147 folds into the Globin domain; it reads HFTEEDKATI…VASALSSRYH (145 aa). Residues histidine 64 and histidine 93 each coordinate heme b.

This sequence belongs to the globin family. As to quaternary structure, heterotetramer of two alpha chains and two gamma chains in fetal hemoglobin (Hb F). Red blood cells.

Functionally, gamma chains make up the fetal hemoglobin F, in combination with alpha chains. This Macaca fuscata fuscata (Japanese macaque) protein is Hemoglobin subunit gamma (HBG).